The primary structure comprises 444 residues: Proline--tRNA ligase (444 aa).

It belongs to the class-II aminoacyl-tRNA synthetase family. ProS type 2 subfamily. In terms of assembly, homodimer.

Its subcellular location is the cytoplasm. It catalyses the reaction tRNA(Pro) + L-proline + ATP = L-prolyl-tRNA(Pro) + AMP + diphosphate. In terms of biological role, catalyzes the attachment of proline to tRNA(Pro) in a two-step reaction: proline is first activated by ATP to form Pro-AMP and then transferred to the acceptor end of tRNA(Pro). The polypeptide is Proline--tRNA ligase (Pelagibacter ubique (strain HTCC1062)).